A 327-amino-acid polypeptide reads, in one-letter code: Ubiquinone biosynthesis protein COQ4, mitochondrial (327 aa).

4 residues coordinate Zn(2+): H208, D209, H212, and E224.

The protein belongs to the COQ4 family. As to quaternary structure, component of a multi-subunit COQ enzyme complex, composed of at least COQ3, COQ4, COQ5, COQ6, COQ7 and COQ9. Zn(2+) serves as cofactor.

It is found in the mitochondrion inner membrane. It carries out the reaction a 4-hydroxy-3-methoxy-5-(all-trans-polyprenyl)benzoate + H(+) = a 2-methoxy-6-(all-trans-polyprenyl)phenol + CO2. It participates in cofactor biosynthesis; ubiquinone biosynthesis. Its function is as follows. Lyase that catalyzes the C1-decarboxylation of 4-hydroxy-3-methoxy-5-(all-trans-polyprenyl)benzoic acid into 2-methoxy-6-(all-trans-polyprenyl)phenol during ubiquinone biosynthesis. The polypeptide is Ubiquinone biosynthesis protein COQ4, mitochondrial (Lachancea thermotolerans (strain ATCC 56472 / CBS 6340 / NRRL Y-8284) (Yeast)).